The primary structure comprises 454 residues: Glutamate--tRNA ligase (454 aa).

The short motif at P7–G17 is the 'HIGH' region element. Zn(2+)-binding residues include C96, C98, C123, and D125. The 'KMSKS' region signature appears at R230–R234. Residue K233 participates in ATP binding.

The protein belongs to the class-I aminoacyl-tRNA synthetase family. Glutamate--tRNA ligase type 1 subfamily. In terms of assembly, monomer. It depends on Zn(2+) as a cofactor.

It is found in the cytoplasm. The enzyme catalyses tRNA(Glu) + L-glutamate + ATP = L-glutamyl-tRNA(Glu) + AMP + diphosphate. In terms of biological role, catalyzes the attachment of glutamate to tRNA(Glu) in a two-step reaction: glutamate is first activated by ATP to form Glu-AMP and then transferred to the acceptor end of tRNA(Glu). The chain is Glutamate--tRNA ligase from Ruthia magnifica subsp. Calyptogena magnifica.